We begin with the raw amino-acid sequence, 150 residues long: Large ribosomal subunit protein uL15 (150 aa).

The disordered stretch occupies residues 1–55 (MADNEILQMHDLKPAPGAKKDRTRVGRGEGSKGKTAGRGAKGQTKRNHVRPGFEG). Over residues 8-32 (QMHDLKPAPGAKKDRTRVGRGEGSK) the composition is skewed to basic and acidic residues.

The protein belongs to the universal ribosomal protein uL15 family. In terms of assembly, part of the 50S ribosomal subunit.

Binds to the 23S rRNA. This is Large ribosomal subunit protein uL15 from Bifidobacterium longum (strain DJO10A).